Reading from the N-terminus, the 647-residue chain is RAF proto-oncogene serine/threonine-protein kinase (647 aa).

S43 carries the phosphoserine modification. The 76-residue stretch at N56–L131 folds into the RBD domain. A Phorbol-ester/DAG-type zinc finger spans residues T138–C184. Disordered stretches follow at residues H236–T269 and H284–G334. Residues T239–T269 show a composition bias toward polar residues. S259 carries the phosphoserine modification. T268 bears the Phosphothreonine; by autocatalysis mark. Residues E286–P297 show a composition bias toward low complexity. The span at N298–K309 shows a compositional bias: polar residues. S338 carries the post-translational modification Phosphoserine. A Protein kinase domain is found at V349 to L609. ATP-binding positions include I355–V363 and K375. D468 serves as the catalytic Proton acceptor. A phosphoserine mark is found at S499 and S621.

Belongs to the protein kinase superfamily. TKL Ser/Thr protein kinase family. RAF subfamily. Post-translationally, phosphorylation at Ser-259 inactivates kinase activity. Dephosphorylation of Ser-259 by a complex containing protein phosphatase 1 relieves inactivation, leading to stimulate RAF1 activity. Isoform 1 was present in all tissues tested: skeletal muscle, intestine, brain, gizzard, heart, lung, kidney, bone marrow, spleen and bursa of Fabricius. Isoform 2 was only detected in brain, heart and skeletal muscle. In brain and heart isoform 1 is more abundant than isoform 2. In skeletal muscle isoform 2 is more abundant than isoform 1.

Its subcellular location is the cytoplasm. The protein resides in the cell membrane. It carries out the reaction L-seryl-[protein] + ATP = O-phospho-L-seryl-[protein] + ADP + H(+). The catalysed reaction is L-threonyl-[protein] + ATP = O-phospho-L-threonyl-[protein] + ADP + H(+). In terms of biological role, serine/threonine-protein kinase that acts as a regulatory link between the membrane-associated Ras GTPases and the MAPK/ERK cascade, and this critical regulatory link functions as a switch determining cell fate decisions. RAF1 activation initiates a mitogen-activated protein kinase (MAPK) cascade that comprises a sequential phosphorylation of the dual-specific MAPK kinases (MAP2K1/MEK1 and MAP2K2/MEK2) and the extracellular signal-regulated kinases (MAPK3/ERK1 and MAPK1/ERK2). In Gallus gallus (Chicken), this protein is RAF proto-oncogene serine/threonine-protein kinase (RAF1).